The primary structure comprises 314 residues: Carbamate kinase (314 aa).

It belongs to the carbamate kinase family. Homodimer.

It localises to the cytoplasm. It carries out the reaction hydrogencarbonate + NH4(+) + ATP = carbamoyl phosphate + ADP + H2O + H(+). Its function is as follows. Carbamate kinase that plays a biosynthetic role in that it produces carbamoyl-phosphate. In Pyrococcus furiosus (strain ATCC 43587 / DSM 3638 / JCM 8422 / Vc1), this protein is Carbamate kinase (cpkA).